The primary structure comprises 135 residues: Large ribosomal subunit protein mL61 (135 aa).

Over residues 114–129 (HHESSPENIKEAHKQD) the composition is skewed to basic and acidic residues. The tract at residues 114-135 (HHESSPENIKEAHKQDYSPPSN) is disordered.

The protein belongs to the mitochondrion-specific ribosomal protein mL61 family. Component of the mitochondrial large ribosomal subunit (mt-LSU). Mature yeast 74S mitochondrial ribosomes consist of a small (37S) and a large (54S) subunit. The 37S small subunit contains a 15S ribosomal RNA (15S mt-rRNA) and at least 32 different proteins. The 54S large subunit contains a 21S rRNA (21S mt-rRNA) and at least 45 different proteins.

Its subcellular location is the mitochondrion. Its function is as follows. Component of the mitochondrial ribosome (mitoribosome), a dedicated translation machinery responsible for the synthesis of mitochondrial genome-encoded proteins, including at least some of the essential transmembrane subunits of the mitochondrial respiratory chain. The mitoribosomes are attached to the mitochondrial inner membrane and translation products are cotranslationally integrated into the membrane. mL61 is not essential in cells grown at 30 degrees Celsius but is required for mitochondrial translation in cells grown at 18 degrees Celsius. This Schizosaccharomyces pombe (strain 972 / ATCC 24843) (Fission yeast) protein is Large ribosomal subunit protein mL61 (mrp49).